We begin with the raw amino-acid sequence, 243 residues long: 2-C-methyl-D-erythritol 4-phosphate cytidylyltransferase (243 aa).

This sequence belongs to the IspD/TarI cytidylyltransferase family. IspD subfamily.

The catalysed reaction is 2-C-methyl-D-erythritol 4-phosphate + CTP + H(+) = 4-CDP-2-C-methyl-D-erythritol + diphosphate. It participates in isoprenoid biosynthesis; isopentenyl diphosphate biosynthesis via DXP pathway; isopentenyl diphosphate from 1-deoxy-D-xylulose 5-phosphate: step 2/6. Functionally, catalyzes the formation of 4-diphosphocytidyl-2-C-methyl-D-erythritol from CTP and 2-C-methyl-D-erythritol 4-phosphate (MEP). This chain is 2-C-methyl-D-erythritol 4-phosphate cytidylyltransferase, found in Pelodictyon phaeoclathratiforme (strain DSM 5477 / BU-1).